The following is a 693-amino-acid chain: Ion-translocating oxidoreductase complex subunit C (693 aa).

2 consecutive 4Fe-4S ferredoxin-type domains span residues 368–397 (MEPV…QQLY) and 407–436 (KARD…VQYY). The [4Fe-4S] cluster site is built by Cys-377, Cys-380, Cys-383, Cys-387, Cys-416, Cys-419, Cys-422, and Cys-426. A compositionally biased stretch (basic and acidic residues) spans 539–548 (REERVREKQS). Positions 539–564 (REERVREKQSQQETPATEVTPEELDP) are disordered.

This sequence belongs to the 4Fe4S bacterial-type ferredoxin family. RnfC subfamily. As to quaternary structure, the complex is composed of six subunits: RnfA, RnfB, RnfC, RnfD, RnfE and RnfG. It depends on [4Fe-4S] cluster as a cofactor.

The protein resides in the cell inner membrane. Its function is as follows. Part of a membrane-bound complex that couples electron transfer with translocation of ions across the membrane. The chain is Ion-translocating oxidoreductase complex subunit C from Pectobacterium atrosepticum (strain SCRI 1043 / ATCC BAA-672) (Erwinia carotovora subsp. atroseptica).